The chain runs to 433 residues: tRNA(Ile)-lysidine synthase (433 aa).

Residue 37–42 (SGGKDS) participates in ATP binding.

Belongs to the tRNA(Ile)-lysidine synthase family.

The protein localises to the cytoplasm. It carries out the reaction cytidine(34) in tRNA(Ile2) + L-lysine + ATP = lysidine(34) in tRNA(Ile2) + AMP + diphosphate + H(+). In terms of biological role, ligates lysine onto the cytidine present at position 34 of the AUA codon-specific tRNA(Ile) that contains the anticodon CAU, in an ATP-dependent manner. Cytidine is converted to lysidine, thus changing the amino acid specificity of the tRNA from methionine to isoleucine. This chain is tRNA(Ile)-lysidine synthase, found in Leptospira interrogans serogroup Icterohaemorrhagiae serovar Lai (strain 56601).